The following is a 434-amino-acid chain: Alpha-enolase (434 aa).

Serine 40 serves as a coordination point for Mg(2+). Histidine 158 and glutamate 167 together coordinate substrate. Glutamate 210 functions as the Proton donor in the catalytic mechanism. Residues aspartate 245, glutamate 293, and aspartate 318 each coordinate Mg(2+). The substrate site is built by glutamate 293 and aspartate 318. Lysine 343 functions as the Proton acceptor in the catalytic mechanism. Substrate contacts are provided by residues 370–373 and lysine 394; that span reads SHRS.

This sequence belongs to the enolase family. As to quaternary structure, homodimer. Requires Mg(2+) as cofactor.

The protein localises to the cytoplasm. The catalysed reaction is (2R)-2-phosphoglycerate = phosphoenolpyruvate + H2O. Its pathway is carbohydrate degradation; glycolysis; pyruvate from D-glyceraldehyde 3-phosphate: step 4/5. Both an enzyme and a lens structural protein. This is Alpha-enolase (ENO1) from Anas platyrhynchos (Mallard).